The following is a 591-amino-acid chain: MVTVVENTDPKIKPVPAVIKELEEKYAGKFVVQHTVDDIPTVWVARADLLDVLLFLRKLPKPYVMLFDLSAIDERLRQHRQGLPDSDFTVFYHLMSLERNSDVRIKVALSEEDLNVPSATQIWPNANWYEREVWDMFGIVFTGHPHLTRILLPKYWEGHPLRKEYHARATEFTPYFLNTAKQQYEQENLRFVPEEWGMKRSGRDEDFMFLNIGPNHPSAHGAFRLVLQLDGEEVVDCIPDIGYHHRGAEKMAERQTWHSFIPYTDRIDYLGGVMNELPYIMSVEKLAGITIPPRAETIRVMMSEFFRITNNLLFVGTFIQDAGGMTPVFYMFTDRQKAYDVIEAVTGYRMHPAWFRIGGTAHDLPRGWQRLVREFLDWMPKRLDEYVKAALQNSVLKGRTQGVAQYNTKQALAWGVTGAGLRATGLDFDLRKARPYMGYENYDFEVPVGYNGDAYDRCMVKVEEMRQSLRIIRQCMDNMPQGPYKADHPLAVPPPKDRTLNDIETLINHFISVSWGPVMPAGECTTIVEATKGLNSYYITSDKATMSYRTRIRTPTFAHLQQMPSVINGSLVSDAIMYLASIDIVMADCDR.

Positions 1–182 are NADH dehydrogenase I subunit C; the sequence is MVTVVENTDP…TPYFLNTAKQ (182 aa). An NADH dehydrogenase I subunit D region spans residues 206–591; it reads DFMFLNIGPN…IDIVMADCDR (386 aa).

This sequence in the N-terminal section; belongs to the complex I 30 kDa subunit family. In the C-terminal section; belongs to the complex I 49 kDa subunit family. NDH-1 is composed of 13 different subunits. Subunits NuoB, CD, E, F, and G constitute the peripheral sector of the complex.

It localises to the cell inner membrane. The catalysed reaction is a quinone + NADH + 5 H(+)(in) = a quinol + NAD(+) + 4 H(+)(out). Functionally, NDH-1 shuttles electrons from NADH, via FMN and iron-sulfur (Fe-S) centers, to quinones in the respiratory chain. The immediate electron acceptor for the enzyme in this species is believed to be ubiquinone. Couples the redox reaction to proton translocation (for every two electrons transferred, four hydrogen ions are translocated across the cytoplasmic membrane), and thus conserves the redox energy in a proton gradient. This is NADH-quinone oxidoreductase subunit C/D from Psychrobacter cryohalolentis (strain ATCC BAA-1226 / DSM 17306 / VKM B-2378 / K5).